Reading from the N-terminus, the 195-residue chain is Glycerol-3-phosphate acyltransferase (195 aa).

5 helical membrane-spanning segments follow: residues 3 to 23 (IHAVVIVLSYLIGSIPFGLIL), 53 to 73 (AVMTLLLDAVKGLISVLLAKI), 80 to 100 (FAFISAMFSIIGHMFPVWLLF), 115 to 135 (LIEYKFVICFLFIWITLFAIF), and 147 to 167 (IFVALLVYMYYTMNDTAVFIA).

Belongs to the PlsY family. Probably interacts with PlsX.

It is found in the cell inner membrane. It catalyses the reaction an acyl phosphate + sn-glycerol 3-phosphate = a 1-acyl-sn-glycero-3-phosphate + phosphate. Its pathway is lipid metabolism; phospholipid metabolism. In terms of biological role, catalyzes the transfer of an acyl group from acyl-phosphate (acyl-PO(4)) to glycerol-3-phosphate (G3P) to form lysophosphatidic acid (LPA). This enzyme utilizes acyl-phosphate as fatty acyl donor, but not acyl-CoA or acyl-ACP. This is Glycerol-3-phosphate acyltransferase from Ehrlichia chaffeensis (strain ATCC CRL-10679 / Arkansas).